Reading from the N-terminus, the 252-residue chain is Isoprenyl transferase 2 (252 aa).

Asp26 is a catalytic residue. Asp26 serves as a coordination point for Mg(2+). Substrate-binding positions include Gly27–Arg30, Trp31, Arg39, His43, and Ser71–Glu73. Residue Asn74 is the Proton acceptor of the active site. Residues Trp75, Arg77, Arg194, and Arg200–Ser202 each bind substrate. Glu213 provides a ligand contact to Mg(2+).

Belongs to the UPP synthase family. Homodimer. Requires Mg(2+) as cofactor.

In terms of biological role, catalyzes the condensation of isopentenyl diphosphate (IPP) with allylic pyrophosphates generating different type of terpenoids. The protein is Isoprenyl transferase 2 of Bradyrhizobium diazoefficiens (strain JCM 10833 / BCRC 13528 / IAM 13628 / NBRC 14792 / USDA 110).